The primary structure comprises 37 residues: Protein YnaM (37 aa).

A helical transmembrane segment spans residues 4–24 (ILIITSLLIIFSIFSHALIKL).

It localises to the cell inner membrane. The chain is Protein YnaM from Escherichia coli (strain K12).